The primary structure comprises 95 residues: Large ribosomal subunit protein bL25 (95 aa).

It belongs to the bacterial ribosomal protein bL25 family. As to quaternary structure, part of the 50S ribosomal subunit; part of the 5S rRNA/L5/L18/L25 subcomplex. Contacts the 5S rRNA. Binds to the 5S rRNA independently of L5 and L18.

Its function is as follows. This is one of the proteins that binds to the 5S RNA in the ribosome where it forms part of the central protuberance. The sequence is that of Large ribosomal subunit protein bL25 from Shewanella sediminis (strain HAW-EB3).